The following is a 152-amino-acid chain: Superoxide dismutase [Cu-Zn] 4A (152 aa).

Cu cation-binding residues include H45, H47, and H62. C56 and C145 are joined by a disulfide. Zn(2+) contacts are provided by H62, H70, H79, and D82. A Cu cation-binding site is contributed by H119.

This sequence belongs to the Cu-Zn superoxide dismutase family. As to quaternary structure, homodimer. Requires Cu cation as cofactor. It depends on Zn(2+) as a cofactor.

It is found in the cytoplasm. The catalysed reaction is 2 superoxide + 2 H(+) = H2O2 + O2. In terms of biological role, destroys radicals which are normally produced within the cells and which are toxic to biological systems. The chain is Superoxide dismutase [Cu-Zn] 4A (SODCC.3) from Zea mays (Maize).